Here is a 262-residue protein sequence, read N- to C-terminus: 4-hydroxy-tetrahydrodipicolinate reductase (262 aa).

9–14 contacts NAD(+); sequence GCLGRM. Arginine 36 is an NADP(+) binding site. NAD(+) contacts are provided by residues 100–102 and 121–124; these read GTT and SANM. Histidine 154 acts as the Proton donor/acceptor in catalysis. Histidine 155 lines the (S)-2,3,4,5-tetrahydrodipicolinate pocket. Lysine 158 functions as the Proton donor in the catalytic mechanism. 164–165 contacts (S)-2,3,4,5-tetrahydrodipicolinate; sequence GT.

It belongs to the DapB family.

The protein resides in the cytoplasm. The catalysed reaction is (S)-2,3,4,5-tetrahydrodipicolinate + NAD(+) + H2O = (2S,4S)-4-hydroxy-2,3,4,5-tetrahydrodipicolinate + NADH + H(+). It catalyses the reaction (S)-2,3,4,5-tetrahydrodipicolinate + NADP(+) + H2O = (2S,4S)-4-hydroxy-2,3,4,5-tetrahydrodipicolinate + NADPH + H(+). It participates in amino-acid biosynthesis; L-lysine biosynthesis via DAP pathway; (S)-tetrahydrodipicolinate from L-aspartate: step 4/4. Catalyzes the conversion of 4-hydroxy-tetrahydrodipicolinate (HTPA) to tetrahydrodipicolinate. The chain is 4-hydroxy-tetrahydrodipicolinate reductase from Wolbachia pipientis subsp. Culex pipiens (strain wPip).